The chain runs to 174 residues: Co-chaperone protein HscB homolog (174 aa).

Positions 2 to 74 constitute a J domain; that stretch reads NYFNLFNFTP…LRRAEHLLSL (73 aa).

It belongs to the HscB family. Interacts with HscA and stimulates its ATPase activity.

In terms of biological role, co-chaperone involved in the maturation of iron-sulfur cluster-containing proteins. Seems to help targeting proteins to be folded toward HscA. This Shewanella denitrificans (strain OS217 / ATCC BAA-1090 / DSM 15013) protein is Co-chaperone protein HscB homolog.